Consider the following 385-residue polypeptide: Histidinol-phosphate aminotransferase (385 aa).

At Lys235 the chain carries N6-(pyridoxal phosphate)lysine.

The protein belongs to the class-II pyridoxal-phosphate-dependent aminotransferase family. Histidinol-phosphate aminotransferase subfamily. In terms of assembly, homodimer. It depends on pyridoxal 5'-phosphate as a cofactor.

The enzyme catalyses L-histidinol phosphate + 2-oxoglutarate = 3-(imidazol-4-yl)-2-oxopropyl phosphate + L-glutamate. Its pathway is amino-acid biosynthesis; L-histidine biosynthesis; L-histidine from 5-phospho-alpha-D-ribose 1-diphosphate: step 7/9. The polypeptide is Histidinol-phosphate aminotransferase (Nocardia farcinica (strain IFM 10152)).